Reading from the N-terminus, the 470-residue chain is V-type proton ATPase subunit S1 (470 aa).

The first 41 residues, 1-41 (MMAAMATARVRMGPRCAQALWRMPWLPVFLSLAAAAAAAAA), serve as a signal peptide directing secretion. The propeptide occupies 42 to 231 (EQQVPLVLWS…TAVRPSRVAR (190 aa)). Residues 42 to 419 (EQQVPLVLWS…EQFSYASDCA (378 aa)) lie on the Lumenal side of the membrane. Residues asparagine 170, asparagine 261, asparagine 273, asparagine 296, asparagine 303, asparagine 350, and asparagine 357 are each glycosylated (N-linked (GlcNAc...) asparagine). Cysteine 371 and cysteine 418 are disulfide-bonded. A helical membrane pass occupies residues 420–440 (SFFSPGIWMGLLTSLFMLFIF). Topologically, residues 441–470 (TYGLHMILSLKTMDRFDDHKGPTISLTQIV) are cytoplasmic. Serine 465 bears the Phosphoserine mark.

It belongs to the vacuolar ATPase subunit S1 family. Accessory component of the multisubunit proton-transporting vacuolar (V)-ATPase protein pump. Interacts (via N-terminus) with ATP6AP2 (via N-terminus). Interacts with RNASEK. Interacts with TMEM106B (via C-terminus). Post-translationally, N-glycosylated. In terms of tissue distribution, widely expressed, with highest levels in brain and lowest in liver and duodenum.

Its subcellular location is the endoplasmic reticulum membrane. The protein resides in the endoplasmic reticulum-Golgi intermediate compartment membrane. It is found in the cytoplasmic vesicle. The protein localises to the secretory vesicle. It localises to the synaptic vesicle membrane. Its subcellular location is the clathrin-coated vesicle membrane. In terms of biological role, accessory subunit of the proton-transporting vacuolar (V)-ATPase protein pump, which is required for luminal acidification of secretory vesicles. Guides the V-type ATPase into specialized subcellular compartments, such as neuroendocrine regulated secretory vesicles or the ruffled border of the osteoclast, thereby regulating its activity. Involved in membrane trafficking and Ca(2+)-dependent membrane fusion. May play a role in the assembly of the V-type ATPase complex. In aerobic conditions, involved in intracellular iron homeostasis, thus triggering the activity of Fe(2+) prolyl hydroxylase (PHD) enzymes, and leading to HIF1A hydroxylation and subsequent proteasomal degradation. In islets of Langerhans cells, may regulate the acidification of dense-core secretory granules. This is V-type proton ATPase subunit S1 (ATP6AP1) from Homo sapiens (Human).